A 623-amino-acid polypeptide reads, in one-letter code: tRNA uridine 5-carboxymethylaminomethyl modification enzyme MnmG (623 aa).

12–17 is an FAD binding site; the sequence is GAGHAG. NAD(+) is bound at residue 272–286; sequence GPRYCPSIEDKINRF.

The protein belongs to the MnmG family. In terms of assembly, homodimer. Heterotetramer of two MnmE and two MnmG subunits. The cofactor is FAD.

The protein resides in the cytoplasm. In terms of biological role, NAD-binding protein involved in the addition of a carboxymethylaminomethyl (cmnm) group at the wobble position (U34) of certain tRNAs, forming tRNA-cmnm(5)s(2)U34. In Flavobacterium psychrophilum (strain ATCC 49511 / DSM 21280 / CIP 103535 / JIP02/86), this protein is tRNA uridine 5-carboxymethylaminomethyl modification enzyme MnmG.